The chain runs to 133 residues: Ribonuclease VapC28 (133 aa).

The region spanning 1–124 (MIVDTSAIIA…LWKGNDFGHT (124 aa)) is the PINc domain. Residues Asp-4 and Asp-100 each coordinate Mg(2+).

It belongs to the PINc/VapC protein family. The cofactor is Mg(2+).

Toxic component of a type II toxin-antitoxin (TA) system. An RNase. Upon expression in M.smegmatis inhibits colony formation. Its toxic effect is neutralized by coexpression with cognate antitoxin VapB28. In Mycobacterium tuberculosis (strain ATCC 25618 / H37Rv), this protein is Ribonuclease VapC28.